The primary structure comprises 469 residues: NADH-quinone oxidoreductase subunit 13 (469 aa).

14 helical membrane-spanning segments follow: residues 1–21, 23–43, 47–67, 69–89, 91–111, 115–135, 144–164, 190–210, 258–278, 284–304, 308–328, 354–374, 390–410, and 430–450; these read MVVL…LGLP, ALGV…FLTH, VAHA…AFGL, GLSA…ALVA, VEGR…GLFA, LLVF…MLYL, ALYT…AAVL, AFWV…LFPL, GLLL…AFAA, LLAY…FSGT, AMGG…LFLL, LAAL…LSGF, WLAA…LTAF, and WGFA…PGYF.

This sequence belongs to the complex I subunit 4 family. NDH-1 is composed of 15 different subunits, Nqo1 to Nqo15. The complex has a L-shaped structure, with the hydrophobic arm (subunits Nqo7, Nqo8 and Nqo10 to Nqo14) embedded in the membrane and the hydrophilic peripheral arm (subunits Nqo1 to Nqo6, Nqo9 and Nqo15) protruding into the bacterial cytoplasm. The hydrophilic domain contains all the redox centers.

The protein resides in the cell inner membrane. It carries out the reaction a quinone + NADH + 5 H(+)(in) = a quinol + NAD(+) + 4 H(+)(out). Its function is as follows. NDH-1 shuttles electrons from NADH, via FMN and iron-sulfur (Fe-S) centers, to quinones in the respiratory chain. The immediate electron acceptor for the enzyme in this species is menaquinone. Couples the redox reaction to proton translocation (for every two electrons transferred, four hydrogen ions are translocated across the cytoplasmic membrane), and thus conserves the redox energy in a proton gradient required for the synthesis of ATP. The protein is NADH-quinone oxidoreductase subunit 13 (nqo13) of Thermus thermophilus (strain ATCC 27634 / DSM 579 / HB8).